The following is a 140-amino-acid chain: Nucleoside diphosphate kinase (140 aa).

ATP contacts are provided by Lys9, Phe57, Arg85, Thr91, Arg102, and Asn112. Catalysis depends on His115, which acts as the Pros-phosphohistidine intermediate.

This sequence belongs to the NDK family. As to quaternary structure, homotetramer. Requires Mg(2+) as cofactor.

The protein localises to the cytoplasm. It carries out the reaction a 2'-deoxyribonucleoside 5'-diphosphate + ATP = a 2'-deoxyribonucleoside 5'-triphosphate + ADP. It catalyses the reaction a ribonucleoside 5'-diphosphate + ATP = a ribonucleoside 5'-triphosphate + ADP. Functionally, major role in the synthesis of nucleoside triphosphates other than ATP. The ATP gamma phosphate is transferred to the NDP beta phosphate via a ping-pong mechanism, using a phosphorylated active-site intermediate. In Chlorobium limicola (strain DSM 245 / NBRC 103803 / 6330), this protein is Nucleoside diphosphate kinase.